Here is a 279-residue protein sequence, read N- to C-terminus: Epidermal growth factor-like protein 7 (279 aa).

Residues 1-21 (MWGSGELLVAWFLVLAAGGTT) form the signal peptide. One can recognise an EMI domain in the interval 28–109 (SRRVCTVGVS…TNGLPGACGA (82 aa)). 9 disulfides stabilise this stretch: C32-C94, C57-C63, C93-C107, C112-C122, C116-C128, C130-C139, C146-C157, C153-C166, and C168-C181. The EGF-like 1 domain occupies 108–140 (GAAICQPPCGNEGSCIRPGRCRCPVGWQGDTCQ). The Cell attachment site signature appears at 131 to 133 (PVG). An EGF-like 2; calcium-binding domain is found at 142–182 (DVDECSTGEARCPQRCVNTVGSYWCQCWEGQSPSADGVLCL). 2 coiled-coil regions span residues 200–224 (SVVR…QLVL) and 250–274 (FQQL…GSCS).

As to quaternary structure, interacts with ITGAV/ITGB3 in an RGD-dependent manner, increasing endothelial cell's motility.

It localises to the secreted. Its subcellular location is the extracellular space. Functionally, regulates vascular tubulogenesis in vivo. Inhibits platelet-derived growth factor (PDGF)-BB-induced smooth muscle cell migration and promotes endothelial cell adhesion to the extracellular matrix and angiogenesis. This Rattus norvegicus (Rat) protein is Epidermal growth factor-like protein 7 (Egfl7).